A 211-amino-acid polypeptide reads, in one-letter code: Protein-L-isoaspartate O-methyltransferase (211 aa).

Serine 62 is an active-site residue.

Belongs to the methyltransferase superfamily. L-isoaspartyl/D-aspartyl protein methyltransferase family.

The protein localises to the cytoplasm. The catalysed reaction is [protein]-L-isoaspartate + S-adenosyl-L-methionine = [protein]-L-isoaspartate alpha-methyl ester + S-adenosyl-L-homocysteine. Catalyzes the methyl esterification of L-isoaspartyl residues in peptides and proteins that result from spontaneous decomposition of normal L-aspartyl and L-asparaginyl residues. It plays a role in the repair and/or degradation of damaged proteins. The sequence is that of Protein-L-isoaspartate O-methyltransferase from Shewanella sp. (strain MR-4).